The primary structure comprises 1778 residues: Ankyrin repeat domain-containing protein 36C (1778 aa).

ANK repeat units follow at residues 64–93, 97–126, 130–159, 163–192, and 196–225; these read KERT…ELNL, EDRT…DPNI, FGRT…NIEE, DEYP…NINA, and LGRS…DVFS. Disordered regions lie at residues 260-365, 501-526, 538-653, 671-1027, and 1051-1072; these read LSIN…DEQK, ALPA…VKDS, DSLT…QKQS, RITG…QKQL, and IRGT…EKDS. Composition is skewed to polar residues over residues 261–272 and 297–306; these read SINSNPVSSQKQ and KSGTVSSQKQ. The span at 539–555 shows a compositional bias: low complexity; sequence SLTSSEESSERPPLSTL. 2 stretches are compositionally biased toward basic and acidic residues: residues 585–596 and 619–630; these read PAEKATSDDKDS and PAEKATSDEKDS. Polar residues-rich tracts occupy residues 631–653 and 679–691; these read VSNI…QKQS and GTVS…PSKA. The segment covering 794 to 813 has biased composition (basic and acidic residues); it reads TSDEKDSFSNITREKKDGEI. S829 is subject to Phosphoserine. Basic and acidic residues-rich tracts occupy residues 840 to 849 and 862 to 881; these read RGKEDGEKTR and TSDE…DGET. At S897 the chain carries Phosphoserine. Basic and acidic residues predominate over residues 907 to 917; sequence AREKKDGEKSR. The segment covering 942–955 has biased composition (basic residues); it reads RGKKHGEKTRRVSS. 2 stretches are compositionally biased toward polar residues: residues 983–992 and 1005–1026; these read ISGTVSSQKQ and VSNI…SQKQ. 4 coiled-coil regions span residues 1157 to 1187, 1247 to 1333, 1362 to 1480, and 1544 to 1768; these read EQDL…QIHS, ELKD…YRIE, SETD…DHDQ, and VFEH…ILQH.

Belongs to the ANKRD36 family.

In Homo sapiens (Human), this protein is Ankyrin repeat domain-containing protein 36C (ANKRD36C).